The sequence spans 370 residues: Protein RKD5 (370 aa).

Residues 193 to 232 (DSETESEESVNEKTEHSEFENDKTEQSESDAKTEILKKKK) are disordered. Residues 202 to 228 (VNEKTEHSEFENDKTEQSESDAKTEIL) are compositionally biased toward basic and acidic residues. In terms of domain architecture, RWP-RK spans 224-309 (KTEILKKKKR…AEKQQEKNEA (86 aa)). Residues 283-328 (HRKIKSLDCLIHDLQREAEKQQEKNEAAAMAVAKKQEKLETEKRNI) are a coiled coil. Residues 347–370 (NFKKRHRASRAKKNQESLVTSSST) are disordered. The span at 349-358 (KKRHRASRAK) shows a compositional bias: basic residues.

Its subcellular location is the nucleus. Putative transcription factor. The chain is Protein RKD5 (RKD5) from Arabidopsis thaliana (Mouse-ear cress).